The sequence spans 433 residues: Probable exopolygalacturonase X (433 aa).

Residues 1–21 (MKLTQATTLLLSLGLSLPVEG) form the signal peptide. The segment at 30-54 (VGPKPPFRPLPASTPRNKTCQVQSN) is disordered. Positions 43–54 (TPRNKTCQVQSN) are enriched in polar residues. N-linked (GlcNAc...) asparagine glycans are attached at residues N46, N127, and N197. The PbH1 1 repeat unit spans residues 229–250 (SSNIVIQNSVINNGDDCVSFKP). The Proton donor role is filled by D243. A disulfide bridge links C245 with C262. N-linked (GlcNAc...) asparagine glycosylation is found at N251 and N263. A PbH1 2 repeat occupies 252-272 (STEILVQNLHCNGSHGISVGS). H266 is a catalytic residue. Residues N290, N295, N327, N352, and N362 are each glycosylated (N-linked (GlcNAc...) asparagine). The PbH1 3 repeat unit spans residues 325–346 (VQNITYDKMYIENVDWAIEVTQ). One copy of the PbH1 4 repeat lies at 360-403 (PSNLTISDVYFNDLTGVTSGKNDPNVGTIICSSPDVCSGIHATN). The cysteines at positions 390 and 396 are disulfide-linked.

This sequence belongs to the glycosyl hydrolase 28 family.

Its subcellular location is the secreted. It carries out the reaction [(1-&gt;4)-alpha-D-galacturonosyl](n) + H2O = alpha-D-galacturonate + [(1-&gt;4)-alpha-D-galacturonosyl](n-1). Specific in hydrolyzing the terminal glycosidic bond of polygalacturonic acid and oligogalacturonates. This is Probable exopolygalacturonase X (pgaX) from Aspergillus flavus (strain ATCC 200026 / FGSC A1120 / IAM 13836 / NRRL 3357 / JCM 12722 / SRRC 167).